Here is a 364-residue protein sequence, read N- to C-terminus: Leucine dehydrogenase (364 aa).

Residue Lys-80 is part of the active site. 180 to 186 (GVGNVAY) provides a ligand contact to NAD(+).

It belongs to the Glu/Leu/Phe/Val dehydrogenases family.

It carries out the reaction L-leucine + NAD(+) + H2O = 4-methyl-2-oxopentanoate + NH4(+) + NADH + H(+). It functions in the pathway amino-acid degradation; L-leucine degradation; 4-methyl-2-oxopentanoate from L-leucine (dehydrogenase route): step 1/1. In terms of biological role, catalyzes the reversible deamination of L-leucine to 4-methyl-2-oxopentanoate. This chain is Leucine dehydrogenase (yqiT), found in Bacillus subtilis (strain 168).